Here is a 243-residue protein sequence, read N- to C-terminus: Ubiquinone/menaquinone biosynthesis C-methyltransferase UbiE (243 aa).

S-adenosyl-L-methionine is bound by residues threonine 69, aspartate 90, and aspartate 116–alanine 117.

This sequence belongs to the class I-like SAM-binding methyltransferase superfamily. MenG/UbiE family.

The catalysed reaction is a 2-demethylmenaquinol + S-adenosyl-L-methionine = a menaquinol + S-adenosyl-L-homocysteine + H(+). The enzyme catalyses a 2-methoxy-6-(all-trans-polyprenyl)benzene-1,4-diol + S-adenosyl-L-methionine = a 5-methoxy-2-methyl-3-(all-trans-polyprenyl)benzene-1,4-diol + S-adenosyl-L-homocysteine + H(+). Its pathway is quinol/quinone metabolism; menaquinone biosynthesis; menaquinol from 1,4-dihydroxy-2-naphthoate: step 2/2. The protein operates within cofactor biosynthesis; ubiquinone biosynthesis. In terms of biological role, methyltransferase required for the conversion of demethylmenaquinol (DMKH2) to menaquinol (MKH2) and the conversion of 2-polyprenyl-6-methoxy-1,4-benzoquinol (DDMQH2) to 2-polyprenyl-3-methyl-6-methoxy-1,4-benzoquinol (DMQH2). This Burkholderia vietnamiensis (strain G4 / LMG 22486) (Burkholderia cepacia (strain R1808)) protein is Ubiquinone/menaquinone biosynthesis C-methyltransferase UbiE.